Here is a 592-residue protein sequence, read N- to C-terminus: NADH-quinone oxidoreductase subunit C/D (592 aa).

The interval 1 to 183 (MSAAQSPTAQ…DPYTLTVEGQ (183 aa)) is NADH dehydrogenase I subunit C. The NADH dehydrogenase I subunit D stretch occupies residues 207–592 (DYMFLNLGPN…IDFVMADVDR (386 aa)).

The protein in the N-terminal section; belongs to the complex I 30 kDa subunit family. This sequence in the C-terminal section; belongs to the complex I 49 kDa subunit family. In terms of assembly, NDH-1 is composed of 13 different subunits. Subunits NuoB, CD, E, F, and G constitute the peripheral sector of the complex.

It localises to the cell inner membrane. The catalysed reaction is a quinone + NADH + 5 H(+)(in) = a quinol + NAD(+) + 4 H(+)(out). NDH-1 shuttles electrons from NADH, via FMN and iron-sulfur (Fe-S) centers, to quinones in the respiratory chain. The immediate electron acceptor for the enzyme in this species is believed to be ubiquinone. Couples the redox reaction to proton translocation (for every two electrons transferred, four hydrogen ions are translocated across the cytoplasmic membrane), and thus conserves the redox energy in a proton gradient. In Chromohalobacter salexigens (strain ATCC BAA-138 / DSM 3043 / CIP 106854 / NCIMB 13768 / 1H11), this protein is NADH-quinone oxidoreductase subunit C/D.